The following is a 254-amino-acid chain: MMSMSFMSDTLNSSDPSKSAFLEFGHGLASNQQHLSGFAHNIYPVHGLHSGGHLQHDAPYPSSAPHYSRPLGYAYPGPVSAAAPGAYMPYQPNNHSGALAHTRAENTNHEKPAVIENGEIRLNGKGKKIRKPRTIYSSVQLQALHQRFQQTQYLALPERADLAAKLGLTQTQVKIWFQNKRSKYKKIMKHGSSGPEGELLHTSSSSPCSPGLSQLWEVSMANKVPPMHPSSYMNNYGHWYPPHHQDPVPRPQMM.

The segment at residues 129-188 is a DNA-binding region (homeobox); sequence IRKPRTIYSSVQLQALHQRFQQTQYLALPERADLAAKLGLTQTQVKIWFQNKRSKYKKIM.

Belongs to the distal-less homeobox family.

It is found in the nucleus. Functionally, during larvae development, may be important for neurocranium morphogenesis. This Danio rerio (Zebrafish) protein is Homeobox protein Dlx4b (dlx4b).